Consider the following 389-residue polypeptide: Acetate kinase (389 aa).

Asn7 provides a ligand contact to Mg(2+). Lys14 contacts ATP. Arg88 serves as a coordination point for substrate. The active-site Proton donor/acceptor is Asp145. ATP is bound by residues His205–Gly209, Asp279–Arg281, and Gly324–Asn328. Residue Glu375 participates in Mg(2+) binding.

The protein belongs to the acetokinase family. As to quaternary structure, homodimer. Mg(2+) serves as cofactor. Mn(2+) is required as a cofactor.

The protein localises to the cytoplasm. It carries out the reaction acetate + ATP = acetyl phosphate + ADP. It participates in metabolic intermediate biosynthesis; acetyl-CoA biosynthesis; acetyl-CoA from acetate: step 1/2. In terms of biological role, catalyzes the formation of acetyl phosphate from acetate and ATP. Can also catalyze the reverse reaction. The protein is Acetate kinase of Sulfurimonas denitrificans (strain ATCC 33889 / DSM 1251) (Thiomicrospira denitrificans (strain ATCC 33889 / DSM 1251)).